Here is a 297-residue protein sequence, read N- to C-terminus: Probable transcription factor vicR (297 aa).

Disordered stretches follow at residues 45–80 (LPGLDSQASPQSGQKEEMRRKNAEAQMQNDSNHSET) and 100–134 (TNQAYQNHPSRSREDITNSRAERHSQTSTQPKNVH). Positions 58–67 (QKEEMRRKNA) are enriched in basic and acidic residues. The span at 69 to 80 (AQMQNDSNHSET) shows a compositional bias: polar residues. Over residues 110 to 124 (RSREDITNSRAERHS) the composition is skewed to basic and acidic residues.

Its subcellular location is the nucleus. Functionally, probable transcription factor; part of the gene cluster that mediates the biosynthesis of the secondary metabolite victorin, the molecular basis for Victoria blight of oats. May play a role in the regulation of the production of victorin. This is Probable transcription factor vicR from Bipolaris victoriae (strain FI3) (Victoria blight of oats agent).